Reading from the N-terminus, the 411-residue chain is MDTAYVVGTFDTKGAELGYVAGLVAARGVPVVTVDVSTSGPETGTADARPADVGNVEVAGHHPDGAAAVFTGDRGTAVTAMAVALERFLAGRAVGGVIALGGSGGTALCTPAMRALPVGVPKVMVSTVASGDVSSYVDATDIAMFPSVTDVAGLNRISRRVLGNAAHALAGAMTGDIASTEDKPAVALTMFGVTTPCVTEVASRLEARYDPLVFHATGTGGRAMEKLVDDGLIGAVLDLTTTEVCDLVAGGVMSAGEGRLDAIARTGVPYVGSCGALDMVNFGAFETVPERYRDRNLYVHNPQVTLMRTTPDECREIGSFIAAKLNACRGPVRFLLPEGGVSLLDAPGQPFHDPDADGVLFEVLESELRQDGDRRIVRVPHNINDPAFADAVLTAFEEVLGAGTIQEGQRE.

The protein belongs to the UPF0261 family.

This chain is UPF0261 protein SACE_5696, found in Saccharopolyspora erythraea (strain ATCC 11635 / DSM 40517 / JCM 4748 / NBRC 13426 / NCIMB 8594 / NRRL 2338).